A 197-amino-acid polypeptide reads, in one-letter code: ATP-dependent Clp protease proteolytic subunit (197 aa).

Catalysis depends on serine 101, which acts as the Nucleophile. The active site involves histidine 126.

The protein belongs to the peptidase S14 family. In terms of assembly, component of the chloroplastic Clp protease core complex.

It is found in the plastid. The protein localises to the chloroplast stroma. The catalysed reaction is Hydrolysis of proteins to small peptides in the presence of ATP and magnesium. alpha-casein is the usual test substrate. In the absence of ATP, only oligopeptides shorter than five residues are hydrolyzed (such as succinyl-Leu-Tyr-|-NHMec, and Leu-Tyr-Leu-|-Tyr-Trp, in which cleavage of the -Tyr-|-Leu- and -Tyr-|-Trp bonds also occurs).. In terms of biological role, cleaves peptides in various proteins in a process that requires ATP hydrolysis. Has a chymotrypsin-like activity. Plays a major role in the degradation of misfolded proteins. The protein is ATP-dependent Clp protease proteolytic subunit of Daucus carota (Wild carrot).